The chain runs to 216 residues: Glycerol-3-phosphate acyltransferase (216 aa).

The next 6 membrane-spanning stretches (helical) occupy residues 3–23, 48–68, 82–102, 112–132, 142–162, and 166–186; these read FPIF…YWIA, IGWK…MLPV, FQLL…FLGF, FGVF…VFWV, LGSI…TILL, and EVSY…ILTH.

It belongs to the PlsY family. As to quaternary structure, probably interacts with PlsX.

Its subcellular location is the cell inner membrane. The catalysed reaction is an acyl phosphate + sn-glycerol 3-phosphate = a 1-acyl-sn-glycero-3-phosphate + phosphate. It functions in the pathway lipid metabolism; phospholipid metabolism. Catalyzes the transfer of an acyl group from acyl-phosphate (acyl-PO(4)) to glycerol-3-phosphate (G3P) to form lysophosphatidic acid (LPA). This enzyme utilizes acyl-phosphate as fatty acyl donor, but not acyl-CoA or acyl-ACP. The protein is Glycerol-3-phosphate acyltransferase of Leptospira interrogans serogroup Icterohaemorrhagiae serovar Lai (strain 56601).